Reading from the N-terminus, the 2723-residue chain is Zinc finger protein 292 (2723 aa).

The segment at 569–591 (YSCPICAKNFNSKETFVPHVTLH) adopts a C2H2-type 1 zinc-finger fold. Residues 608-633 (RLGRPPKITTTNENQKTNTVAKQEQR) are disordered. A compositionally biased stretch (polar residues) spans 615–629 (ITTTNENQKTNTVAK). Serine 654 is modified (phosphoserine). C2H2-type zinc fingers lie at residues 681-705 (FNCP…VKGH), 722-744 (VICQ…LQMH), 750-774 (YICI…RKEH), 779-803 (AKCM…EAQH), and 807-831 (YTCK…LDDH). Residues 825 to 834 (EKHLDDHSTP) show a composition bias toward basic and acidic residues. Positions 825-860 (EKHLDDHSTPPEKVLPPEAQLNSSGDSIQPSEVNQN) are disordered. Residues 844-860 (QLNSSGDSIQPSEVNQN) show a composition bias toward polar residues. A C2H2-type 7 zinc finger spans residues 1098-1123 (FSCQVEGCTRTYNSSQSIGKHMKTAH). At lysine 1117 the chain carries N6-acetyllysine. Residue serine 1159 is modified to Phosphoserine. Positions 1331 to 1364 (SSTNAQQSAPEKVKKDRGRGPNGKERKPKHNKRA) are disordered. Positions 1341–1355 (EKVKKDRGRGPNGKE) are enriched in basic and acidic residues. The segment at 1375 to 1397 (FICSRCYRAFTNPRSLGGHLSKR) adopts a C2H2-type 8; degenerate zinc-finger fold. Positions 1588 to 1627 (SFPNSGGPSQNFTSNSSRVSVISGPQNTRSSHLNKKGNSA) are enriched in polar residues. The tract at residues 1588-1634 (SFPNSGGPSQNFTSNSSRVSVISGPQNTRSSHLNKKGNSASKRRKKV) is disordered. The stretch at 1827–1854 (QSEVSHKEDQIQEILEGLQKLKLENDLS) forms a coiled coil. C2H2-type zinc fingers lie at residues 1902–1927 (FVCQ…GKIH) and 1947–1972 (FKCV…QLVH). Positions 1986–2023 (RPYGRKSQSENVPASRSTQVKKQLAMTEENKKESQPAL) are disordered. A compositionally biased stretch (polar residues) spans 1994–2006 (SENVPASRSTQVK). Position 2042 is an N6-acetyllysine (lysine 2042). Residues 2074 to 2103 (NTQTKGRKIRRHKKEKEEKKRKKPVSQSLE) are disordered. Residues 2078–2097 (KGRKIRRHKKEKEEKKRKKP) show a composition bias toward basic residues. C2H2-type zinc fingers lie at residues 2114-2139 (YRCV…QAVH), 2172-2197 (FRCQ…MKLH), 2216-2241 (FPCD…EADH), and 2256-2281 (YKCD…FNKH). 2 stretches are compositionally biased toward basic residues: residues 2285 to 2294 (HKAHLIRPRR) and 2312 to 2322 (KSKHRGTKHSR). The tract at residues 2285–2345 (HKAHLIRPRR…KKKNNLENKN (61 aa)) is disordered. The C2H2-type 15 zinc-finger motif lies at 2386–2410 (YPCMIKGCTSVVTSESNIIRHYKCH). Residues 2441-2452 (QEGAKNDVKDSD) are compositionally biased toward basic and acidic residues. Disordered stretches follow at residues 2441–2480 (QEGA…EKDE), 2530–2564 (LKRV…VRKE), and 2606–2631 (QKKN…RKNI). Positions 2453–2470 (TCVSESNDNSRTTATVSQ) are enriched in polar residues. The span at 2606–2615 (QKKNTDKDHP) shows a compositional bias: basic and acidic residues.

It belongs to the krueppel C2H2-type zinc-finger protein family.

The protein resides in the nucleus. In terms of biological role, may be involved in transcriptional regulation. The polypeptide is Zinc finger protein 292 (ZNF292) (Homo sapiens (Human)).